The sequence spans 129 residues: Iron-sulfur cluster assembly 1 homolog, mitochondrial (129 aa).

The N-terminal 12 residues, 1–12, are a transit peptide targeting the mitochondrion; the sequence is MSASLVRATVRA. Positions 57, 121, and 123 each coordinate Fe cation.

Belongs to the HesB/IscA family. In terms of assembly, interacts with CRY2, but not with CRY1 (in vitro).

The protein resides in the mitochondrion. In terms of biological role, involved in the maturation of mitochondrial 4Fe-4S proteins functioning late in the iron-sulfur cluster assembly pathway. Probably involved in the binding of an intermediate of Fe/S cluster assembly. The protein is Iron-sulfur cluster assembly 1 homolog, mitochondrial (Isca1) of Rattus norvegicus (Rat).